The following is a 326-amino-acid chain: MATIKDVAGAAGVSVATVSRNLNDNGYVHEETRTRVIAAMAKLNYYPNEVARSLYKRESRLIGLLLPDITNPFFPQLARGAEDELNREGYRLIFGNSDEELKKELEYLQTFKQNHVAGIIAATNYPDLEEYSGMNYPVVFLDRTLEGAPSVSSDGYTGVKLAAQAIIHGKSQRITLLRGPAHLPTAQDRFNGALEILKQAEVDFQVIETASFSIKDAQSMAKELFASYPATDGVIASNDIQAAAVLHEALRRGKNVPEDIQIIGYDDIPQSGLLFPPLSTIKQPAYDMGKEAAKLLLGIIKKQPLAETAIQMPVTYIGRKTTRKED.

Positions 1–56 constitute an HTH lacI-type domain; the sequence is MATIKDVAGAAGVSVATVSRNLNDNGYVHEETRTRVIAAMAKLNYYPNEVARSLYK. The H-T-H motif DNA-binding region spans 4 to 23; it reads IKDVAGAAGVSVATVSRNLN.

Functionally, transcriptional repressor for the ribose rbsDACBK operon. This chain is Ribose operon repressor (rbsR), found in Bacillus subtilis (strain 168).